We begin with the raw amino-acid sequence, 866 residues long: DNA mismatch repair protein MutS (866 aa).

ATP is bound at residue 618-625 (GPNMSGKS).

It belongs to the DNA mismatch repair MutS family.

This protein is involved in the repair of mismatches in DNA. It is possible that it carries out the mismatch recognition step. This protein has a weak ATPase activity. The sequence is that of DNA mismatch repair protein MutS from Flavobacterium psychrophilum (strain ATCC 49511 / DSM 21280 / CIP 103535 / JIP02/86).